The primary structure comprises 178 residues: uncharacterized protein (178 aa).

A compositionally biased stretch (polar residues) spans 1–13 (MEVASSSSACQFD). Disordered stretches follow at residues 1-24 (MEVASSSSACQFDNLNNNNNELKP) and 47-114 (WPSR…KKEK).

This is an uncharacterized protein from Caenorhabditis elegans.